Reading from the N-terminus, the 238-residue chain is Thrombin-like enzyme collinein-1 (238 aa).

In terms of domain architecture, Peptidase S1 spans valine 1–alanine 229. 6 disulfide bridges follow: cysteine 7/cysteine 141, cysteine 28/cysteine 44, cysteine 78/cysteine 236, cysteine 120/cysteine 190, cysteine 152/cysteine 169, and cysteine 180/cysteine 205. Residues histidine 43 and aspartate 88 each act as charge relay system in the active site. Catalysis depends on serine 184, which acts as the Charge relay system.

The protein belongs to the peptidase S1 family. Snake venom subfamily. Monomer. In terms of tissue distribution, expressed by the venom gland.

It is found in the secreted. Its activity is regulated as follows. Inhibited by Cu(2+) and, to a lesser extent, by Zn(2+) and Ba(2+). Not inhibited by Ca(2+) and Mg(2+). Its function is as follows. Thrombin-like snake venom serine protease. Releases fibrinopeptide A and B in the conversion of fibrinogen to fibrin, with preferential activity on the alpha chain of fibrinogen. Also hydrolyzes N-p-toluensulfonyl arginine ester (TAME) and chromogenic artificial substrates of the blood coagulation cascade: S-2222 for factor Xa, S-2302 for kallikrein and S-2238 for thrombin. When tested in vitro, the recombinant protein does not degrade blood clots, suggesting that this toxin lacks fibrinolytic activity. In addition, it moderately inhibits human Kv10.1/KCNH1/EAG1 currents, with a mechanism independent of its enzymatic activity. It selectively blocks Kv10.1/KCNH1/EAG1 in a time and dose-dependent manner (IC(50)=4.2 uM for native protein and IC(50)=2.5 uM for recombinant protein). It may have a preference in interacting with Kv10.1/KCNH1/EAG1 in its closed state, since the inhibitory effect of the toxin is decreased at more depolarized potentials. Corroboratively, it may have possible antitumor applications, since it reduces the viability of human breast cancer cell line MCF-7, which strongly expresses Kv10.1/KCNH1/EAG1, but does not affect the liver carcinoma and the non-tumorigenic epithelial breast cell lines, which weakly express Kv10.1/KCNH1/EAG1. When tested on peripheral blood mononuclear cells (PBMC), the native protein shows mild cytotoxicity, whereas the recombinant protein does not show any cytotoxicity. Native form is not immununogenic, since it does not induce statistically significant antibody production in mice, whereas recombinant form shows an antibody titer slightly higher than the native form. In vivo, subplantar injection in mice paw induces a discreet paw edema. In addition, intraperitoneal injection of the recombinant protein into mice led to fibrinogen depletion, resulting in the blood incoagulability. The sequence is that of Thrombin-like enzyme collinein-1 from Crotalus durissus collilineatus (Brazilian rattlesnake).